A 440-amino-acid polypeptide reads, in one-letter code: Chromosome partition protein MukF (440 aa).

Positions leucine 208 to isoleucine 236 are leucine-zipper.

Belongs to the MukF family. Interacts, and probably forms a ternary complex, with MukE and MukB via its C-terminal region. The complex formation is stimulated by calcium or magnesium. It is required for an interaction between MukE and MukB.

The protein resides in the cytoplasm. It localises to the nucleoid. In terms of biological role, involved in chromosome condensation, segregation and cell cycle progression. May participate in facilitating chromosome segregation by condensation DNA from both sides of a centrally located replisome during cell division. Not required for mini-F plasmid partitioning. Probably acts via its interaction with MukB and MukE. Overexpression results in anucleate cells. It has a calcium binding activity. This chain is Chromosome partition protein MukF, found in Cronobacter sakazakii (strain ATCC BAA-894) (Enterobacter sakazakii).